Consider the following 166-residue polypeptide: Interferon gamma (166 aa).

The first 23 residues, 1–23, serve as a signal peptide directing secretion; it reads MNYTTICLAFQLCVIFCSSGYYC. Pyrrolidone carboxylic acid is present on Q24. N-linked (GlcNAc...) asparagine glycans are attached at residues N39, N106, and N107.

It belongs to the type II (or gamma) interferon family. As to quaternary structure, homodimer. Interacts with IFNGR1 (via extracellular domain); this interaction promotes IFNGR1 dimerization.

Its subcellular location is the secreted. Type II interferon produced by immune cells such as T-cells and NK cells that plays crucial roles in antimicrobial, antiviral, and antitumor responses by activating effector immune cells and enhancing antigen presentation. Primarily signals through the JAK-STAT pathway after interaction with its receptor IFNGR1 to affect gene regulation. Upon IFNG binding, IFNGR1 intracellular domain opens out to allow association of downstream signaling components JAK2, JAK1 and STAT1, leading to STAT1 activation, nuclear translocation and transcription of IFNG-regulated genes. Many of the induced genes are transcription factors such as IRF1 that are able to further drive regulation of a next wave of transcription. Plays a role in class I antigen presentation pathway by inducing a replacement of catalytic proteasome subunits with immunoproteasome subunits. In turn, increases the quantity, quality, and repertoire of peptides for class I MHC loading. Increases the efficiency of peptide generation also by inducing the expression of activator PA28 that associates with the proteasome and alters its proteolytic cleavage preference. Up-regulates as well MHC II complexes on the cell surface by promoting expression of several key molecules such as cathepsins B/CTSB, H/CTSH, and L/CTSL. Participates in the regulation of hematopoietic stem cells during development and under homeostatic conditions by affecting their development, quiescence, and differentiation. The protein is Interferon gamma (IFNG) of Mustela putorius furo (European domestic ferret).